We begin with the raw amino-acid sequence, 183 residues long: GMP synthase [glutamine-hydrolyzing] subunit A (183 aa).

Positions 2–183 constitute a Glutamine amidotransferase type-1 domain; sequence KIYVIYNYGQ…YRNFIEICKK (182 aa). C74 functions as the Nucleophile in the catalytic mechanism. Active-site residues include H161 and E163.

Heterodimer composed of a glutamine amidotransferase subunit (A) and a GMP-binding subunit (B).

The enzyme catalyses XMP + L-glutamine + ATP + H2O = GMP + L-glutamate + AMP + diphosphate + 2 H(+). The protein operates within purine metabolism; GMP biosynthesis; GMP from XMP (L-Gln route): step 1/1. Functionally, catalyzes the synthesis of GMP from XMP. This is GMP synthase [glutamine-hydrolyzing] subunit A from Archaeoglobus fulgidus (strain ATCC 49558 / DSM 4304 / JCM 9628 / NBRC 100126 / VC-16).